The following is a 108-amino-acid chain: UPF0060 membrane protein Msil_1658 (108 aa).

Helical transmembrane passes span 5–25 (LVYV…WAWL), 31–51 (SLWL…LTLI), 62–82 (AYGG…EGVW), and 88–108 (LGGA…PRPA).

This sequence belongs to the UPF0060 family.

The protein localises to the cell inner membrane. This is UPF0060 membrane protein Msil_1658 from Methylocella silvestris (strain DSM 15510 / CIP 108128 / LMG 27833 / NCIMB 13906 / BL2).